Reading from the N-terminus, the 146-residue chain is Gonadotropin subunit beta-2 (146 aa).

The N-terminal stretch at 1 to 28 (TGTPVKILVVRNILLLLFCLVVLLVFAQ) is a signal peptide. Cystine bridges form between C35–C83, C49–C98, C52–C136, C60–C114, C64–C116, and C119–C126. N-linked (GlcNAc...) asparagine glycosylation is present at N39.

Belongs to the glycoprotein hormones subunit beta family. Heterodimer of an alpha and a beta chain.

Its subcellular location is the secreted. Functionally, involved in gametogenesis and steroidogenesis. This is Gonadotropin subunit beta-2 (cgbb) from Ctenopharyngodon idella (Grass carp).